The chain runs to 189 residues: Peptidyl-tRNA hydrolase (189 aa).

Y15 lines the tRNA pocket. Residue H20 is the Proton acceptor of the active site. Residues F66, N68, and N114 each contribute to the tRNA site.

It belongs to the PTH family. As to quaternary structure, monomer.

The protein resides in the cytoplasm. It carries out the reaction an N-acyl-L-alpha-aminoacyl-tRNA + H2O = an N-acyl-L-amino acid + a tRNA + H(+). Functionally, hydrolyzes ribosome-free peptidyl-tRNAs (with 1 or more amino acids incorporated), which drop off the ribosome during protein synthesis, or as a result of ribosome stalling. Catalyzes the release of premature peptidyl moieties from peptidyl-tRNA molecules trapped in stalled 50S ribosomal subunits, and thus maintains levels of free tRNAs and 50S ribosomes. This is Peptidyl-tRNA hydrolase from Streptococcus pyogenes serotype M6 (strain ATCC BAA-946 / MGAS10394).